A 552-amino-acid chain; its full sequence is Phosphoribosylaminoimidazole carboxylase (552 aa).

The 188-residue stretch at 108–295 (KQHLQVFKIA…QFEAHLRAIC (188 aa)) folds into the ATP-grasp domain. 134-189 (GQEFGYPFVLKSKTLAYDGRGNYVVHQPSEIPTAIKALGDRPLYVEKFVPFSMEIA) is an ATP binding site.

This sequence in the C-terminal section; belongs to the AIR carboxylase family. Class I subfamily.

The catalysed reaction is 5-amino-1-(5-phospho-D-ribosyl)imidazole-4-carboxylate + H(+) = 5-amino-1-(5-phospho-beta-D-ribosyl)imidazole + CO2. It participates in purine metabolism; IMP biosynthesis via de novo pathway; 5-amino-1-(5-phospho-D-ribosyl)imidazole-4-carboxylate from 5-amino-1-(5-phospho-D-ribosyl)imidazole (carboxylase route): step 1/1. The chain is Phosphoribosylaminoimidazole carboxylase (ade6) from Schizosaccharomyces pombe (strain 972 / ATCC 24843) (Fission yeast).